A 255-amino-acid chain; its full sequence is Ribonuclease HII (255 aa).

Residues 72 to 255 (AIICGIDEVG…KSFEPIKSLL (184 aa)) form the RNase H type-2 domain. 3 residues coordinate a divalent metal cation: D78, E79, and D170.

This sequence belongs to the RNase HII family. Mn(2+) serves as cofactor. Requires Mg(2+) as cofactor.

Its subcellular location is the cytoplasm. The enzyme catalyses Endonucleolytic cleavage to 5'-phosphomonoester.. In terms of biological role, endonuclease that specifically degrades the RNA of RNA-DNA hybrids. The polypeptide is Ribonuclease HII (Staphylococcus aureus (strain bovine RF122 / ET3-1)).